We begin with the raw amino-acid sequence, 348 residues long: Glycerol-1-phosphate dehydrogenase [NAD(P)+] (348 aa).

Residues 94–98 (GKVID) and 116–119 (TTAS) each bind NAD(+). Position 121 (Asp-121) interacts with substrate. Ser-125 contacts NAD(+). Asp-168 provides a ligand contact to substrate. Zn(2+) contacts are provided by Asp-168 and His-248. Substrate is bound at residue His-252. His-264 serves as a coordination point for Zn(2+).

Belongs to the glycerol-1-phosphate dehydrogenase family. Homooctamer. Zn(2+) serves as cofactor.

Its subcellular location is the cytoplasm. It carries out the reaction sn-glycerol 1-phosphate + NAD(+) = dihydroxyacetone phosphate + NADH + H(+). It catalyses the reaction sn-glycerol 1-phosphate + NADP(+) = dihydroxyacetone phosphate + NADPH + H(+). It participates in membrane lipid metabolism; glycerophospholipid metabolism. Its function is as follows. Catalyzes the NAD(P)H-dependent reduction of dihydroxyacetonephosphate (DHAP or glycerone phosphate) to glycerol 1-phosphate (G1P). The G1P thus generated is used as the glycerophosphate backbone of phospholipids in the cellular membranes of Archaea. This is Glycerol-1-phosphate dehydrogenase [NAD(P)+] from Methanobrevibacter smithii (strain ATCC 35061 / DSM 861 / OCM 144 / PS).